We begin with the raw amino-acid sequence, 285 residues long: Iron uptake system component EfeM (285 aa).

The signal sequence occupies residues 1–34 (MTYPLLTRKTLMKKTPLALLLTLGLLQTPLAAFA).

This sequence belongs to the EfeM/EfeO family. Component of the iron transporter efeUOB/M complex composed of EfeU, EfeM and EfeB.

It localises to the periplasm. Its function is as follows. Part of the iron transporter system efeUOB/M involved in iron import. Specifically binds Fe(3+), which is produced by EfeB-mediated oxidation of Fe(2+), and delivers it to the cell inner membrane permease EfeU. Also binds Zn(2+) and Cu(2+) in vitro. The sequence is that of Iron uptake system component EfeM from Pseudomonas syringae pv. syringae (strain B728a).